A 56-amino-acid chain; its full sequence is Potassium channel toxin alpha-KTx 9.8 (56 aa).

Positions 1–19 are cleaved as a signal peptide; that stretch reads MSRLFTLVLIVLAMNVMMA. Positions 20-28 are excised as a propeptide; the sequence is IISDPVVEA. Cystine bridges form between Cys31/Cys47, Cys34/Cys52, and Cys38/Cys54.

This sequence belongs to the short scorpion toxin superfamily. Potassium channel inhibitor family. Alpha-KTx 09 subfamily. As to expression, expressed by the venom gland.

The protein localises to the secreted. In terms of biological role, potassium channel inhibitor. In Buthus israelis (Israeli scorpion), this protein is Potassium channel toxin alpha-KTx 9.8.